We begin with the raw amino-acid sequence, 37 residues long: MKIFRDILTNAEVVXDNDKPMDVLDEIVYAXQGRYIE.

In terms of domain architecture, TCTP spans 1 to 37 (MKIFRDILTNAEVVXDNDKPMDVLDEIVYAXQGRYIE).

It belongs to the TCTP family. Monomer.

The protein resides in the cytoplasm. In terms of biological role, binds calcium; exact function not known. The chain is Translationally-controlled tumor protein homolog from Trypanosoma brucei brucei.